The chain runs to 357 residues: Protein-L-isoaspartate O-methyltransferase domain-containing protein 1 (357 aa).

A lipid anchor (N-myristoyl glycine) is attached at G2. S64 is an active-site residue. 3 adoMet binding motif regions span residues 85-94 (LNLGSGTGYL), 160-164 (YDRIY), and 181-191 (LKVGGILVMPI). The BC-box stretch occupies residues 240 to 250 (VRNLQDLARIY). The interval 299–333 (PLDSEEDEKMEEDNKEEEEKDHNEAMKPEEPPQNL) is disordered. The segment covering 301 to 317 (DSEEDEKMEEDNKEEEE) has biased composition (acidic residues). The segment covering 318–333 (KDHNEAMKPEEPPQNL) has biased composition (basic and acidic residues). The tract at residues 341 to 344 (LPLP) is CUL-box.

Belongs to the methyltransferase superfamily. L-isoaspartyl/D-aspartyl protein methyltransferase family. In terms of assembly, component of the probable ECS(PCMTD1) E3 ubiquitin-protein ligase complex, at least composed of CUL5, ELOB, ELOC, RBX2 and PCMTD1. Interacts (via the BC-box) with ELOB and ELOC; the interaction is direct and stabilizes PCMTD1.

It is found in the cytoplasm. It localises to the membrane. Its function is as follows. Substrate recognition component of an ECS (Elongin BC-CUL5-SOCS-box protein) E3 ubiquitin ligase complex which mediates the ubiquitination and subsequent proteasomal degradation of target proteins. Specifically binds to the methyltransferase cofactor S-adenosylmethionine (AdoMet) via the N-terminal AdoMet binding motif, but does not display methyltransferase activity. May provide an alternate maintenance pathway for modified proteins by acting as a damage-specific E3 ubiquitin ligase adaptor protein. This Homo sapiens (Human) protein is Protein-L-isoaspartate O-methyltransferase domain-containing protein 1.